The primary structure comprises 89 residues: Small ribosomal subunit protein uS15 (89 aa).

It belongs to the universal ribosomal protein uS15 family. As to quaternary structure, part of the 30S ribosomal subunit. Forms a bridge to the 50S subunit in the 70S ribosome, contacting the 23S rRNA.

Its function is as follows. One of the primary rRNA binding proteins, it binds directly to 16S rRNA where it helps nucleate assembly of the platform of the 30S subunit by binding and bridging several RNA helices of the 16S rRNA. In terms of biological role, forms an intersubunit bridge (bridge B4) with the 23S rRNA of the 50S subunit in the ribosome. The sequence is that of Small ribosomal subunit protein uS15 from Frankia casuarinae (strain DSM 45818 / CECT 9043 / HFP020203 / CcI3).